Consider the following 247-residue polypeptide: Small ribosomal subunit protein uS2 (247 aa).

The protein belongs to the universal ribosomal protein uS2 family.

The sequence is that of Small ribosomal subunit protein uS2 from Ectopseudomonas mendocina (strain ymp) (Pseudomonas mendocina).